The chain runs to 764 residues: Elongation factor G, mitochondrial (764 aa).

The N-terminal 23 residues, methionine 1–arginine 23, are a transit peptide targeting the mitochondrion. The region spanning alanine 56–serine 337 is the tr-type G domain. GTP-binding positions include alanine 65–threonine 72, aspartate 136–histidine 140, and asparagine 190–aspartate 193.

Belongs to the TRAFAC class translation factor GTPase superfamily. Classic translation factor GTPase family. EF-G/EF-2 subfamily.

It localises to the mitochondrion. It functions in the pathway protein biosynthesis; polypeptide chain elongation. Its function is as follows. Mitochondrial GTPase that catalyzes the GTP-dependent ribosomal translocation step during translation elongation. During this step, the ribosome changes from the pre-translocational (PRE) to the post-translocational (POST) state as the newly formed A-site-bound peptidyl-tRNA and P-site-bound deacylated tRNA move to the P and E sites, respectively. Catalyzes the coordinated movement of the two tRNA molecules, the mRNA and conformational changes in the ribosome. The chain is Elongation factor G, mitochondrial from Yarrowia lipolytica (strain CLIB 122 / E 150) (Yeast).